The following is a 459-amino-acid chain: Lipase 4 (459 aa).

A signal peptide spans 1-14 (MLFLLFLLVAPIYA). Cys110 and Cys281 are joined by a disulfide. Ser194 functions as the Charge relay system in the catalytic mechanism. N-linked (GlcNAc...) asparagine glycans are attached at residues Asn229 and Asn266. Residues Asp343 and His376 each act as charge relay system in the active site. Cys359 and Cys404 are joined by a disulfide.

It belongs to the AB hydrolase superfamily. Lipase family. Class Lip subfamily.

The protein resides in the secreted. The catalysed reaction is a triacylglycerol + H2O = a diacylglycerol + a fatty acid + H(+). Its function is as follows. Secreted lipase that is able to hydrolyze both the neutral triacylglycerols and the monopalmitate ester Tween 40, allowing the use of hydrolyzed products as carbon sources. Has broad lipolytic activity, which may be important for colonization and subsequent infection, therefore contributing to the persistence and virulence in human tissue. The chain is Lipase 4 from Candida albicans (strain SC5314 / ATCC MYA-2876) (Yeast).